The sequence spans 122 residues: uncharacterized protein (122 aa).

2 helical membrane passes run 14-34 (WLWI…FNNV) and 83-103 (IIGV…YFII).

It is found in the cell membrane. This is an uncharacterized protein from Ureaplasma parvum serovar 3 (strain ATCC 700970).